The sequence spans 608 residues: Ceramide kinase (608 aa).

The DAGKc domain maps to 160-367 (ERPRNLLVFV…LDAMQVVRWK (208 aa)). Residues 170–174 (HPKSG), T201, and 230–236 (GDGFFNE) contribute to the ATP site. 229–232 (GGDG) serves as a coordination point for substrate. D231 acts as the Proton donor/acceptor in catalysis. The tract at residues 254–280 (PSDSFNSVQSRGSSSVPEPGDEVHETD) is disordered. A compositionally biased stretch (polar residues) spans 255 to 269 (SDSFNSVQSRGSSSV). S329 is an ATP binding site.

It depends on Ca(2+) as a cofactor.

It carries out the reaction an N-acylsphing-4-enine + ATP = an N-acylsphing-4-enine 1-phosphate + ADP + H(+). Functionally, catalyzes specifically the phosphorylation of ceramide to form ceramide 1-phosphate. Possesses high activity on ceramide analogs (C6, C8 synthetic ceramides) and lower activity on C6 and C8 dihydroceramides. Has weak activity on natural ceramides (a mixture of ceramides from bovine brain) and the synthetic substrate C2 ceramide. Has very poor activity on diacylglycerol and sphingosine. Ceramide is a critical sphingolipid metabolite that induces programmed cell death (PCD) in plants and ceramide-1-phosphate has a PCD suppressive effect. Thus, ceramide phosphorylation plays a role in the modulation of PCD and CERK activity is crucial for the maintenance of cell viability. The polypeptide is Ceramide kinase (CERK) (Arabidopsis thaliana (Mouse-ear cress)).